A 215-amino-acid polypeptide reads, in one-letter code: Cytochrome b6 (215 aa).

The chain crosses the membrane as a helical span at residues 32 to 52 (IFYCLGGITLTCFIIQVATGF). Heme c is bound at residue cysteine 35. The heme b site is built by histidine 86 and histidine 100. 3 helical membrane-spanning segments follow: residues 90–110 (ASMM…TGGF), 116–136 (LTWV…VTGY), and 186–206 (LHTF…FLMI). Positions 187 and 202 each coordinate heme b.

Belongs to the cytochrome b family. PetB subfamily. As to quaternary structure, the 4 large subunits of the cytochrome b6-f complex are cytochrome b6, subunit IV (17 kDa polypeptide, PetD), cytochrome f and the Rieske protein, while the 4 small subunits are PetG, PetL, PetM and PetN. The complex functions as a dimer. Requires heme b as cofactor. Heme c serves as cofactor.

Its subcellular location is the plastid. The protein localises to the chloroplast thylakoid membrane. In terms of biological role, component of the cytochrome b6-f complex, which mediates electron transfer between photosystem II (PSII) and photosystem I (PSI), cyclic electron flow around PSI, and state transitions. The chain is Cytochrome b6 from Zygnema circumcarinatum (Green alga).